The chain runs to 510 residues: 2,3-bisphosphoglycerate-independent phosphoglycerate mutase (510 aa).

D13 and S63 together coordinate Mn(2+). The active-site Phosphoserine intermediate is S63. Substrate is bound by residues H124, 154 to 155, R186, R192, 262 to 265, and K334; these read RD and RADR. D401, H405, D442, H443, and H461 together coordinate Mn(2+).

This sequence belongs to the BPG-independent phosphoglycerate mutase family. In terms of assembly, monomer. Mn(2+) is required as a cofactor.

The catalysed reaction is (2R)-2-phosphoglycerate = (2R)-3-phosphoglycerate. It functions in the pathway carbohydrate degradation; glycolysis; pyruvate from D-glyceraldehyde 3-phosphate: step 3/5. Catalyzes the interconversion of 2-phosphoglycerate and 3-phosphoglycerate. The sequence is that of 2,3-bisphosphoglycerate-independent phosphoglycerate mutase from Vibrio atlanticus (strain LGP32) (Vibrio splendidus (strain Mel32)).